The following is a 268-amino-acid chain: Secreted RxLR effector protein 6 (268 aa).

An N-terminal signal peptide occupies residues 1-19 (MRGAFYIAIALLVVRSRTA). Positions 48 to 63 (RYLRDGLAHSAANEER) match the RxLR-dEER motif. The segment at 90 to 123 (IGGHSHTPKSKRKVNLSPAKSQSGIRKKSTSINK) is disordered. The segment covering 107 to 123 (PAKSQSGIRKKSTSINK) has biased composition (polar residues).

Belongs to the RxLR effector family.

It localises to the secreted. Its subcellular location is the host nucleus. It is found in the host cytoplasm. Its function is as follows. Secreted effector that completely suppresses the host cell death induced by cell death-inducing proteins. This Plasmopara viticola (Downy mildew of grapevine) protein is Secreted RxLR effector protein 6.